The following is a 511-amino-acid chain: MTIILKPGSVPLETLEKIYREGLPVRIDPAFHAGIEKAAARIAEIAAGDAPVYGINTGFGKLASIRIAAGDVATLQRNLILSHCCGVGEPLSENIVRLIMALKLVSLGRGASGVRLEVITLIEAMLEKGVIPMIPEKGSVGASGDLAPLAHMTAAMIGEGEAFYRGERLSGAKALGKAGLKPVVLAAKEGLALINGTQTSTALALAGLFRAHRAVRTALITGALSTDAAMGSDAPFHEEIHQLRGHKGQIDAGRALRTLLEGSAIRRSHLEGDQRVQDPYCIRCQPQVDGACLDILRQAARTLEIEANAVTDNPLVLSDGRAVSGGNFHAEPVAFAADQIALAVCEIGAISQRRIALLVDPSLSFGLPAFLARKPGLNSGLMIAEVTSAALMSENNQMAHPASVDSTPTSANQEDHVSMACHGARRLLQMTANLNAIIGIEALTGALGVELRKPLTTSAELAKVIAALRAKVAALEEDRYMADDLKAAAELVADGTLSGVISAGILPDLET.

Positions 142–144 (ASG) form a cross-link, 5-imidazolinone (Ala-Gly). A 2,3-didehydroalanine (Ser) modification is found at serine 143.

Belongs to the PAL/histidase family. In terms of processing, contains an active site 4-methylidene-imidazol-5-one (MIO), which is formed autocatalytically by cyclization and dehydration of residues Ala-Ser-Gly.

The protein resides in the cytoplasm. The catalysed reaction is L-histidine = trans-urocanate + NH4(+). Its pathway is amino-acid degradation; L-histidine degradation into L-glutamate; N-formimidoyl-L-glutamate from L-histidine: step 1/3. The polypeptide is Histidine ammonia-lyase (Brucella suis (strain ATCC 23445 / NCTC 10510)).